We begin with the raw amino-acid sequence, 193 residues long: uncharacterized protein (193 aa).

A run of 3 helical transmembrane segments spans residues 5-25, 63-83, and 90-110; these read LILLIVVLFLTPYLIALFIIF, IFILIVEIIALCSGFYILINI, and ILTFSLIFLFIAIIYDKLTPA.

It is found in the cell membrane. This is an uncharacterized protein from Methanocaldococcus jannaschii (strain ATCC 43067 / DSM 2661 / JAL-1 / JCM 10045 / NBRC 100440) (Methanococcus jannaschii).